The following is a 297-amino-acid chain: Ketohexokinase (297 aa).

Beta-D-fructose-binding residues include Asp15, Gly41, Asn42, and Asn45. ATP contacts are provided by residues Arg107, 225-228 (AEEG), and 254-257 (GAGD). Asp257 contributes to the beta-D-fructose binding site.

It belongs to the carbohydrate kinase PfkB family. In terms of assembly, homodimer.

It catalyses the reaction beta-D-fructose + ATP = beta-D-fructose 1-phosphate + ADP + H(+). It functions in the pathway carbohydrate metabolism; fructose metabolism. Requires potassium. Inhibition by ADP. Functionally, catalyzes the phosphorylation of the ketose sugar fructose to fructose-1-phosphate. In Pongo abelii (Sumatran orangutan), this protein is Ketohexokinase (KHK).